A 921-amino-acid polypeptide reads, in one-letter code: GPI ethanolamine phosphate transferase 1 (921 aa).

At 1-9 (MKNNTRFTL) the chain is on the cytoplasmic side. Residues 10 to 30 (IVVGVLFHLLYLWSIFDIYFI) traverse the membrane as a helical segment. Residues 31 to 457 (SPLVHGMEQK…TTYNWRFIRT (427 aa)) lie on the Lumenal side of the membrane. N-linked (GlcNAc...) asparagine glycosylation is found at N90, N138, N198, N262, and N286. The chain crosses the membrane as a helical span at residues 458 to 478 (IVTFGFLGWICYSFMIFLKLF). Residues 479-488 (ILNNSQTTHP) are Cytoplasmic-facing. A helical transmembrane segment spans residues 489–509 (SILNISIFTSLGLILNYILFY). Over 510 to 516 (QKSPLNF) the chain is Lumenal. Residues 517–537 (YLYLIFPLFFWSKIFSNTAII) traverse the membrane as a helical segment. The Cytoplasmic portion of the chain corresponds to 538–552 (RDGVNEFFKGISKAE). Residues 553 to 573 (SVIIGLTIISIYEGIVYGFFH) traverse the membrane as a helical segment. The Lumenal portion of the chain corresponds to 574–575 (RW). A helical membrane pass occupies residues 576–596 (ILSLILVSFAFYPLVCGVTDL). Over 597-599 (FTN) the chain is Cytoplasmic. Residues 600 to 620 (LLWILTSVGLSSFTLLDAVKI) form a helical membrane-spanning segment. Residue E621 is a topological domain, lumenal. Residues 622–642 (NLQQIQVAGILIVLSSAYAVM) form a helical membrane-spanning segment. The Cytoplasmic segment spans residues 643-654 (RLSQDISKYTQH). Residues 655–675 (LLSIQIFLVSGMLHFTSKSVI) form a helical membrane-spanning segment. At 676 to 684 (SLQKREGLP) the chain is on the lumenal side. The chain crosses the membrane as a helical span at residues 685 to 705 (AFAQVGGWAILVISLTIMPFL). The Cytoplasmic portion of the chain corresponds to 706–728 (HYLKPNNNYQVRLLTIYLTFAPS). Residues 729 to 749 (FIILSISFEALFYFIFTAYIV) traverse the membrane as a helical segment. Residues 750–777 (QWLQIEKNIKVLKDEQKSDSNGIQLLRV) lie on the Lumenal side of the membrane. A helical transmembrane segment spans residues 778-798 (AIIGFFLQQIAFFGTGNVASI). At 799-819 (SSFSLDSVYRLLPVFDPFPMG) the chain is on the cytoplasmic side. The helical transmembrane segment at 820–840 (ALLMLKLIIPYVLLSCGLGIM) threads the bilayer. Residues 841 to 849 (NIQLDIKDY) are Lumenal-facing. Residues 850–870 (TISSLIISTSDILSLNFFYLL) traverse the membrane as a helical segment. At 871-878 (KTEGSWLD) the chain is on the cytoplasmic side. The chain crosses the membrane as a helical span at residues 879 to 899 (IGVTISNYCLAILSSLFMLIL). Residues 900-921 (EIVGHQLLKNVTRATSSQKKTN) lie on the Lumenal side of the membrane. Residue N909 is glycosylated (N-linked (GlcNAc...) asparagine).

The protein belongs to the PIGG/PIGN/PIGO family. PIGN subfamily.

The protein localises to the endoplasmic reticulum membrane. It participates in glycolipid biosynthesis; glycosylphosphatidylinositol-anchor biosynthesis. In terms of biological role, ethanolamine phosphate transferase involved in glycosylphosphatidylinositol-anchor biosynthesis. Transfers ethanolamine phosphate to the first alpha-1,4-linked mannose of the glycosylphosphatidylinositol precursor of GPI-anchor. This is GPI ethanolamine phosphate transferase 1 (MCD4) from Candida glabrata (strain ATCC 2001 / BCRC 20586 / JCM 3761 / NBRC 0622 / NRRL Y-65 / CBS 138) (Yeast).